The primary structure comprises 211 residues: FMN-dependent NADH:quinone oxidoreductase (211 aa).

FMN is bound by residues Ser-10 and 16–18; that span reads STS.

Belongs to the azoreductase type 1 family. Homodimer. It depends on FMN as a cofactor.

The enzyme catalyses 2 a quinone + NADH + H(+) = 2 a 1,4-benzosemiquinone + NAD(+). It carries out the reaction N,N-dimethyl-1,4-phenylenediamine + anthranilate + 2 NAD(+) = 2-(4-dimethylaminophenyl)diazenylbenzoate + 2 NADH + 2 H(+). In terms of biological role, quinone reductase that provides resistance to thiol-specific stress caused by electrophilic quinones. Also exhibits azoreductase activity. Catalyzes the reductive cleavage of the azo bond in aromatic azo compounds to the corresponding amines. The protein is FMN-dependent NADH:quinone oxidoreductase of Frankia casuarinae (strain DSM 45818 / CECT 9043 / HFP020203 / CcI3).